We begin with the raw amino-acid sequence, 285 residues long: Diaminopimelate epimerase (285 aa).

Substrate is bound by residues N11 and N62. C71 functions as the Proton donor in the catalytic mechanism. Substrate is bound by residues 72 to 73, N167, N200, and 218 to 219; these read GN and ER. C227 functions as the Proton acceptor in the catalytic mechanism. A substrate-binding site is contributed by 228–229; sequence GT.

The protein belongs to the diaminopimelate epimerase family. Homodimer.

Its subcellular location is the cytoplasm. It carries out the reaction (2S,6S)-2,6-diaminopimelate = meso-2,6-diaminopimelate. It participates in amino-acid biosynthesis; L-lysine biosynthesis via DAP pathway; DL-2,6-diaminopimelate from LL-2,6-diaminopimelate: step 1/1. Catalyzes the stereoinversion of LL-2,6-diaminopimelate (L,L-DAP) to meso-diaminopimelate (meso-DAP), a precursor of L-lysine and an essential component of the bacterial peptidoglycan. In Agathobacter rectalis (strain ATCC 33656 / DSM 3377 / JCM 17463 / KCTC 5835 / VPI 0990) (Eubacterium rectale), this protein is Diaminopimelate epimerase.